The primary structure comprises 134 residues: Holo-[acyl-carrier-protein] synthase (134 aa).

Mg(2+)-binding residues include Asp-8 and Glu-57.

It belongs to the P-Pant transferase superfamily. AcpS family. Mg(2+) is required as a cofactor.

It is found in the cytoplasm. The enzyme catalyses apo-[ACP] + CoA = holo-[ACP] + adenosine 3',5'-bisphosphate + H(+). Transfers the 4'-phosphopantetheine moiety from coenzyme A to a Ser of acyl-carrier-protein. This is Holo-[acyl-carrier-protein] synthase from Brucella abortus (strain S19).